We begin with the raw amino-acid sequence, 273 residues long: Formamidopyrimidine-DNA glycosylase (273 aa).

The active-site Schiff-base intermediate with DNA is P2. The active-site Proton donor is the E3. K59 functions as the Proton donor; for beta-elimination activity in the catalytic mechanism. DNA is bound by residues H93, R111, and R154. An FPG-type zinc finger spans residues 239–273 (KVYGRGGEPCKECGHTLVRIRLAGRSTVFCPCCQV). R263 functions as the Proton donor; for delta-elimination activity in the catalytic mechanism.

Belongs to the FPG family. In terms of assembly, monomer. It depends on Zn(2+) as a cofactor.

It carries out the reaction Hydrolysis of DNA containing ring-opened 7-methylguanine residues, releasing 2,6-diamino-4-hydroxy-5-(N-methyl)formamidopyrimidine.. The catalysed reaction is 2'-deoxyribonucleotide-(2'-deoxyribose 5'-phosphate)-2'-deoxyribonucleotide-DNA = a 3'-end 2'-deoxyribonucleotide-(2,3-dehydro-2,3-deoxyribose 5'-phosphate)-DNA + a 5'-end 5'-phospho-2'-deoxyribonucleoside-DNA + H(+). In terms of biological role, involved in base excision repair of DNA damaged by oxidation or by mutagenic agents. Acts as a DNA glycosylase that recognizes and removes damaged bases. Has a preference for oxidized purines, such as 7,8-dihydro-8-oxoguanine (8-oxoG). Has AP (apurinic/apyrimidinic) lyase activity and introduces nicks in the DNA strand. Cleaves the DNA backbone by beta-delta elimination to generate a single-strand break at the site of the removed base with both 3'- and 5'-phosphates. This Desulfitobacterium hafniense (strain DSM 10664 / DCB-2) protein is Formamidopyrimidine-DNA glycosylase.